A 634-amino-acid polypeptide reads, in one-letter code: Biosynthetic arginine decarboxylase (634 aa).

Lys103 carries the N6-(pyridoxal phosphate)lysine modification. Substrate is bound at residue 283–293; that stretch reads FDVGGGLGVDY.

Belongs to the Orn/Lys/Arg decarboxylase class-II family. SpeA subfamily. It depends on Mg(2+) as a cofactor. Pyridoxal 5'-phosphate serves as cofactor.

It catalyses the reaction L-arginine + H(+) = agmatine + CO2. The protein operates within amine and polyamine biosynthesis; agmatine biosynthesis; agmatine from L-arginine: step 1/1. Its function is as follows. Catalyzes the biosynthesis of agmatine from arginine. The sequence is that of Biosynthetic arginine decarboxylase from Photorhabdus laumondii subsp. laumondii (strain DSM 15139 / CIP 105565 / TT01) (Photorhabdus luminescens subsp. laumondii).